The following is a 185-amino-acid chain: MADDQFPGWHGTTIIGVKKGGEVVIAGDGQVSLGQTVIKGTARKVRRLSPGGYHVVAGFAGSTADAFTLLERLEAKLEATPGQLARASVELAKDWRTDKYLQKLEAMLIVSDGQDMFVITGAGDVLEPEHDVAAIGSGGNFALAAARAMMDSDKSAEEVARAAMAIAADICVYTNGNLTVEKIAK.

Thr-12 is a catalytic residue. Na(+) is bound by residues Ala-168, Cys-171, and Thr-174.

The protein belongs to the peptidase T1B family. HslV subfamily. A double ring-shaped homohexamer of HslV is capped on each side by a ring-shaped HslU homohexamer. The assembly of the HslU/HslV complex is dependent on binding of ATP.

The protein localises to the cytoplasm. The catalysed reaction is ATP-dependent cleavage of peptide bonds with broad specificity.. Allosterically activated by HslU binding. Protease subunit of a proteasome-like degradation complex believed to be a general protein degrading machinery. The chain is ATP-dependent protease subunit HslV from Ruegeria pomeroyi (strain ATCC 700808 / DSM 15171 / DSS-3) (Silicibacter pomeroyi).